The chain runs to 526 residues: Methane monooxygenase component A alpha chain (526 aa).

Fe cation contacts are provided by E114, E144, and H147. C151 is a catalytic residue. The Fe cation site is built by E209, E243, and H246.

The protein belongs to the TmoA/XamoA family. M.trichosporium has two forms of methane monooxygenase, a soluble and a membrane-bound type. The soluble type consists of four components (A to D): protein A, comprising three chains, in an alpha-2, beta-2, gamma-2 configuration, is a nonheme iron protein containing an unusual mu-hydroxo bridge structure at its active site and interacts with both oxygen and methane. The cofactor is Fe cation.

It carries out the reaction methane + NADH + O2 + H(+) = methanol + NAD(+) + H2O. It catalyses the reaction methane + NADPH + O2 + H(+) = methanol + NADP(+) + H2O. In terms of biological role, responsible for the initial oxygenation of methane to methanol in methanotrophs. It also catalyzes the monohydroxylation of a variety of unactivated alkenes, alicyclic, aromatic and heterocyclic compounds. This Methylosinus trichosporium protein is Methane monooxygenase component A alpha chain (mmoX).